A 183-amino-acid chain; its full sequence is Ras-related protein Rap-2a (183 aa).

Gly-10 to Ser-17 serves as a coordination point for GTP. The Effector region motif lies at Tyr-32–Tyr-40. Residues Asp-57–Thr-61 and Asn-116–Asp-119 contribute to the GTP site. Residues Cys-176 and Cys-177 are each lipidated (S-palmitoyl cysteine). Cys-180 carries the post-translational modification Cysteine methyl ester. A lipid anchor (S-farnesyl cysteine) is attached at Cys-180. The propeptide at Val-181–Leu-183 is removed in mature form.

Belongs to the small GTPase superfamily. Ras family. Interacts (GTP-bound form) with RUNDC3A. Interacts with PLCE1. Interacts with ARHGAP29, SGSM1, SGSM2 and SGSM3. Interacts (GTP-bound form preferentially) with TNIK (via the CNH domain); the interaction is direct and recruits RAP2A to the E3 ubiquitin ligase NEDD4. Interacts with MINK1. Interacts (GTP-bound form preferentially) with MAP4K4. Interacts with cytoskeletal actin. Interacts with RGS14; the interaction is GTP-dependent. Ubiquitinated; undergoes 'Lys-63' monoubiquitination and diubiquitination by NEDD4. Multiple lysine residues are probably modified. Ubiquitination requires TNIK, prevents interaction with effectors and inactivates RAP2A. Ubiquitination by the ECS(RAB40B) complex leads to RAP2A localization to lamellipodia plasma membrane, activation, and regulation of sorting at early endosomes for recycling to the lamellipodia plasma membrane. In terms of processing, palmitoylated. Palmitoylation is required for association with recycling endosome membranes and activation of TNIK.

Its subcellular location is the midbody. It is found in the cell projection. It localises to the lamellipodium membrane. The protein localises to the golgi apparatus. The protein resides in the recycling endosome membrane. Its subcellular location is the lysosome. The catalysed reaction is GTP + H2O = GDP + phosphate + H(+). Its activity is regulated as follows. Activated by the guanine nucleotide-exchange factors RAPGEF3 and RAPGEF4 in a cAMP-dependent manner. Nucleotide exchange is also specifically stimulated by RAPGEF5, RASGEF1A and RASGEF1B. Small GTP-binding protein which cycles between a GDP-bound inactive and a GTP-bound active form. In its active form interacts with and regulates several effectors including MAP4K4, MINK1 and TNIK. Part of a signaling complex composed of NEDD4, RAP2A and TNIK which regulates neuronal dendrite extension and arborization during development. More generally, it is part of several signaling cascades and may regulate cytoskeletal rearrangements, cell migration, cell adhesion and cell spreading. The chain is Ras-related protein Rap-2a (RAP2A) from Sus scrofa (Pig).